The chain runs to 307 residues: Ribonuclease Z (307 aa).

Zn(2+) contacts are provided by His61, His63, Asp65, His66, His138, Asp208, and His264. Asp65 functions as the Proton acceptor in the catalytic mechanism.

Belongs to the RNase Z family. As to quaternary structure, homodimer. Zn(2+) serves as cofactor.

It catalyses the reaction Endonucleolytic cleavage of RNA, removing extra 3' nucleotides from tRNA precursor, generating 3' termini of tRNAs. A 3'-hydroxy group is left at the tRNA terminus and a 5'-phosphoryl group is left at the trailer molecule.. In terms of biological role, zinc phosphodiesterase, which displays some tRNA 3'-processing endonuclease activity. Probably involved in tRNA maturation, by removing a 3'-trailer from precursor tRNA. The protein is Ribonuclease Z of Pyrococcus horikoshii (strain ATCC 700860 / DSM 12428 / JCM 9974 / NBRC 100139 / OT-3).